A 106-amino-acid polypeptide reads, in one-letter code: Circadian clock oscillator protein KaiB (106 aa).

The protein belongs to the KaiB family. As to quaternary structure, the KaiABC complex composition changes during the circadian cycle to control KaiC phosphorylation. Complexes KaiC(6), KaiA(2-4):KaiC(6), KaiB(6):KaiC(6) and KaiC(6):KaiB(6):KaiA(12) are among the most important forms, many form cooperatively. Undergoes a major conformational rearrangment; in the free state forms homotetramers as a dimer of dimers. When bound to the CI domain of KaiC switches to a monomeric thioredoxin-fold (KaiB(fs)). KaiB(fs) binds CikA, leading it to dephosphorylate phospho-RpaA.

Key component of the KaiABC oscillator complex, which constitutes the main circadian regulator in cyanobacteria. Complex composition changes during the circadian cycle to control KaiC phosphorylation. KaiA stimulates KaiC autophosphorylation, while KaiB sequesters KaiA, leading to KaiC autodephosphorylation. Phospho-Ser-431 KaiC accumulation triggers binding of KaiB to form the KaiB(6):KaiC(6) complex, leading to changes in output regulators CikA and SasA. KaiB switches to a thioredoxin-like fold (KaiB(fs)) when bound to KaiC. KaiB(6):KaiC(6) formation exposes a site for KaiA binding that sequesters KaiA from KaiC, making the KaiC(6):KaiB(6):KaiA(12) complex that results in KaiC autodephosphorylation. In terms of biological role, a metamorphic protein which reversibly switches between an inactive tetrameric fold and a rare, thioredoxin-like monomeric fold (KaiB(fs)). KaiB(fs) binds phospho-KaiC, KaiA and CikA. KaiA and CikA compete for binding to KaiB(fs), and KaiB(fs) and SasA compete for binding to KaiC, thus the clock oscillator and output signal pathway are tightly coupled. This chain is Circadian clock oscillator protein KaiB, found in Gloeothece citriformis (strain PCC 7424) (Cyanothece sp. (strain PCC 7424)).